A 401-amino-acid chain; its full sequence is MHCDVLWHNARLMTLDAGDGGLGSVDDGVVACQDGTIVYAGPAADAPPLQASHVHDCQRRWISPGLIDCHTHLVYAGNRANEFEQRLRGASYAQIAAAGGGIVATVRATRAADDAALLAASLPRLDALLAEGVTTLEIKSGYGLTLEDEIKQLRVARQLATLRQVEVVPTFLGAHAVPPGAQGQTYIDAVCQEMIPAVAAQGLAEAVDVFCEHLAFSPAQAEQVFVAARAHGLQIKIHAEQLSNQHGAALAARYGALSADHIEYLDQAGIDAMANAGTVAVLLPGAFYFTRDTQLPPIPALRAAGVPLALATDCNPGTSPLTSPLLAMNMAATLFRMTVDGCITGFTREAARALGRGNRLGRLRAGMQCDLAIWDIDAPADLVYRMGFNPLHTRVWRGHPC.

Residues histidine 70 and histidine 72 each coordinate Fe(3+). 2 residues coordinate Zn(2+): histidine 70 and histidine 72. The 4-imidazolone-5-propanoate site is built by arginine 79, tyrosine 142, and histidine 175. N-formimidoyl-L-glutamate is bound at residue tyrosine 142. Histidine 238 is a Fe(3+) binding site. Histidine 238 lines the Zn(2+) pocket. Glutamine 241 provides a ligand contact to 4-imidazolone-5-propanoate. Residue aspartate 313 coordinates Fe(3+). Aspartate 313 is a binding site for Zn(2+). N-formimidoyl-L-glutamate is bound by residues asparagine 315 and glycine 317. 4-imidazolone-5-propanoate is bound at residue threonine 318.

This sequence belongs to the metallo-dependent hydrolases superfamily. HutI family. It depends on Zn(2+) as a cofactor. Fe(3+) serves as cofactor.

It is found in the cytoplasm. The enzyme catalyses 4-imidazolone-5-propanoate + H2O = N-formimidoyl-L-glutamate. It participates in amino-acid degradation; L-histidine degradation into L-glutamate; N-formimidoyl-L-glutamate from L-histidine: step 3/3. Functionally, catalyzes the hydrolytic cleavage of the carbon-nitrogen bond in imidazolone-5-propanoate to yield N-formimidoyl-L-glutamate. It is the third step in the universal histidine degradation pathway. The protein is Imidazolonepropionase of Xanthomonas campestris pv. campestris (strain 8004).